The sequence spans 555 residues: T-complex protein 1 subunit eta (555 aa).

The protein belongs to the TCP-1 chaperonin family. As to quaternary structure, heterooligomeric complex of about 850 to 900 kDa that forms two stacked rings, 12 to 16 nm in diameter.

It localises to the cytoplasm. Its function is as follows. Molecular chaperone; assists the folding of proteins upon ATP hydrolysis. Known to play a role, in vitro, in the folding of actin and tubulin. This Dictyostelium discoideum (Social amoeba) protein is T-complex protein 1 subunit eta (cct7).